Here is a 461-residue protein sequence, read N- to C-terminus: Photosystem II CP43 reaction center protein (461 aa).

The propeptide occupies 1-2 (ME). Threonine 3 is modified (N-acetylthreonine). Threonine 3 is subject to Phosphothreonine. The next 5 membrane-spanning stretches (helical) occupy residues 57–81 (LFEVAHFVPEKPMYEQGLILLPHLA), 122–143 (LLGPETLEESFPFFGYVWKDRN), 166–188 (KALYFGGVYDTWAPGGGDVRKIT), 243–263 (KPFAWARRAFVWSGEAYLSYS), and 279–300 (WFNNTAYPSEFYGPTGPEASQA). [CaMn4O5] cluster is bound at residue glutamate 355. Residues 435–459 (RARAAAAGFEKGIDRDLEPVLSMTP) form a helical membrane-spanning segment.

The protein belongs to the PsbB/PsbC family. PsbC subfamily. As to quaternary structure, PSII is composed of 1 copy each of membrane proteins PsbA, PsbB, PsbC, PsbD, PsbE, PsbF, PsbH, PsbI, PsbJ, PsbK, PsbL, PsbM, PsbT, PsbX, PsbY, PsbZ, Psb30/Ycf12, at least 3 peripheral proteins of the oxygen-evolving complex and a large number of cofactors. It forms dimeric complexes. Requires Binds multiple chlorophylls and provides some of the ligands for the Ca-4Mn-5O cluster of the oxygen-evolving complex. It may also provide a ligand for a Cl- that is required for oxygen evolution. PSII binds additional chlorophylls, carotenoids and specific lipids. as cofactor.

Its subcellular location is the plastid. It localises to the chloroplast thylakoid membrane. In terms of biological role, one of the components of the core complex of photosystem II (PSII). It binds chlorophyll and helps catalyze the primary light-induced photochemical processes of PSII. PSII is a light-driven water:plastoquinone oxidoreductase, using light energy to abstract electrons from H(2)O, generating O(2) and a proton gradient subsequently used for ATP formation. In Ceratophyllum demersum (Rigid hornwort), this protein is Photosystem II CP43 reaction center protein.